Reading from the N-terminus, the 253-residue chain is Ribonuclease HII (253 aa).

One can recognise an RNase H type-2 domain in the interval 70–253 (PLVAGIDEVG…RSFSPVQNAL (184 aa)). The a divalent metal cation site is built by aspartate 76, glutamate 77, and aspartate 168.

Belongs to the RNase HII family. Mn(2+) is required as a cofactor. Mg(2+) serves as cofactor.

The protein resides in the cytoplasm. It carries out the reaction Endonucleolytic cleavage to 5'-phosphomonoester.. Functionally, endonuclease that specifically degrades the RNA of RNA-DNA hybrids. The polypeptide is Ribonuclease HII (Latilactobacillus sakei subsp. sakei (strain 23K) (Lactobacillus sakei subsp. sakei)).